Here is a 433-residue protein sequence, read N- to C-terminus: MRLTVIGGGLAGSEAAYQAAQQGVTVDLYEMRPVKTTAAHKTGELAELVCSNSLRAKSLENAAGLLKEELRKFDSLIMKVADQVQVPAGGALAVDREAFSQKVTEYIENHPNINLITEEVTEINESQPTVIATGPLTSTSLTERIQKLTGTDFLYFYDAAAPIVTYESINKNIAYWASRYGKGTPDYLNCPMTKEEYEDFYQELINAEKVPLKSFEKEVVFEGCMPVEQMANRGKDTLVFGPLKPVGLENPNTGEMPYAVVQLRKDNREGTLYNLVGFQTRLKWPEQRRVFRKIPGLEEAEFVRYGVMHRNTFINSPKVLTANYQLRERPGLFFAGQVTGVEGYVESTASGLVAGLNAARKLQGNETLTFPRETALGALASYIVEASPDNFQPMNINFGLLPSLEKKVPKKIKKQKQSERALKILEEFIERKL.

7–12 (GGGLAG) is an FAD binding site.

It belongs to the MnmG family. TrmFO subfamily. Requires FAD as cofactor.

The protein resides in the cytoplasm. The catalysed reaction is uridine(54) in tRNA + (6R)-5,10-methylene-5,6,7,8-tetrahydrofolate + NADH + H(+) = 5-methyluridine(54) in tRNA + (6S)-5,6,7,8-tetrahydrofolate + NAD(+). It catalyses the reaction uridine(54) in tRNA + (6R)-5,10-methylene-5,6,7,8-tetrahydrofolate + NADPH + H(+) = 5-methyluridine(54) in tRNA + (6S)-5,6,7,8-tetrahydrofolate + NADP(+). Functionally, catalyzes the folate-dependent formation of 5-methyl-uridine at position 54 (M-5-U54) in all tRNAs. In Natranaerobius thermophilus (strain ATCC BAA-1301 / DSM 18059 / JW/NM-WN-LF), this protein is Methylenetetrahydrofolate--tRNA-(uracil-5-)-methyltransferase TrmFO.